A 151-amino-acid chain; its full sequence is MGSDDLSAGDKIQKGFQINYMILRDADTGKVIWQENKDFSAPDVEHEARVPVKILDMRAVSREINFSTIESMENFRLDQKVLFKGRIMEEWFFEMGFVGANTTNTWQSTIEAAPESQMMPAKVLNGNVTIQTSFYDNEILITKSVVRLYYI.

Belongs to the PDE6D/unc-119 family. As to quaternary structure, interacts with Pde6.

The protein localises to the nucleus. It is found in the cytoplasm. In Drosophila mojavensis (Fruit fly), this protein is Probable cGMP 3',5'-cyclic phosphodiesterase subunit delta.